We begin with the raw amino-acid sequence, 843 residues long: Glycogen phosphorylase, brain form (843 aa).

Ala-2 bears the N-acetylalanine mark. At Ser-15 the chain carries Phosphoserine; by PHK; in form phosphorylase A. Residues Asp-43, Tyr-197, and Arg-310 each contribute to the AMP site. Residue Tyr-197 is modified to Phosphotyrosine. Tyr-473 carries the post-translational modification Phosphotyrosine. Residue Lys-569 participates in pyridoxal 5'-phosphate binding. Positions 677–678 (TG) are pyridoxal 5'-phosphate. An N6-(pyridoxal phosphate)lysine modification is found at Lys-681.

Belongs to the glycogen phosphorylase family. In terms of assembly, homodimer. Dimers associate into a tetramer to form the enzymatically active phosphorylase A. It depends on pyridoxal 5'-phosphate as a cofactor. Phosphorylated. Phosphorylation of Ser-15 converts phosphorylase B (unphosphorylated) to phosphorylase A.

The enzyme catalyses [(1-&gt;4)-alpha-D-glucosyl](n) + phosphate = [(1-&gt;4)-alpha-D-glucosyl](n-1) + alpha-D-glucose 1-phosphate. Activity of phosphorylase is controlled both by allosteric means (through the non-covalent binding of metabolites) and by covalent modification. Thus AMP allosterically activates, whereas ATP, ADP, and glucose-6-phosphate allosterically inhibit, phosphorylase B. Activated upon phosphorylation. Glycogen phosphorylase that regulates glycogen mobilization. Phosphorylase is an important allosteric enzyme in carbohydrate metabolism. Enzymes from different sources differ in their regulatory mechanisms and in their natural substrates. However, all known phosphorylases share catalytic and structural properties. In Homo sapiens (Human), this protein is Glycogen phosphorylase, brain form.